The primary structure comprises 164 residues: PTS system sorbose-specific EIIB component (164 aa).

Residues 1-164 enclose the PTS EIIB type-4 domain; that stretch reads MIITLARVDD…AKIDEVFGKE (164 aa). Catalysis depends on His14, which acts as the Pros-phosphohistidine intermediate. Residue His14 is modified to Phosphohistidine; by EIIA.

It localises to the cytoplasm. It catalyses the reaction keto-L-sorbose(out) + N(pros)-phospho-L-histidyl-[protein] = L-sorbose 1-phosphate(in) + L-histidyl-[protein]. Functionally, the phosphoenolpyruvate-dependent sugar phosphotransferase system (PTS), a major carbohydrate active transport system, catalyzes the phosphorylation of incoming sugar substrates concomitant with their translocation across the cell membrane. The enzyme II SorABCD PTS system is involved in L-sorbose transport. This chain is PTS system sorbose-specific EIIB component, found in Lacticaseibacillus casei (Lactobacillus casei).